The chain runs to 1415 residues: DNA-directed RNA polymerase subunit beta' (1415 aa).

4 residues coordinate Zn(2+): cysteine 69, cysteine 71, cysteine 84, and cysteine 87. Aspartate 461, aspartate 463, and aspartate 465 together coordinate Mg(2+). 4 residues coordinate Zn(2+): cysteine 805, cysteine 879, cysteine 886, and cysteine 889.

It belongs to the RNA polymerase beta' chain family. As to quaternary structure, the RNAP catalytic core consists of 2 alpha, 1 beta, 1 beta' and 1 omega subunit. When a sigma factor is associated with the core the holoenzyme is formed, which can initiate transcription. Requires Mg(2+) as cofactor. It depends on Zn(2+) as a cofactor.

The catalysed reaction is RNA(n) + a ribonucleoside 5'-triphosphate = RNA(n+1) + diphosphate. DNA-dependent RNA polymerase catalyzes the transcription of DNA into RNA using the four ribonucleoside triphosphates as substrates. The polypeptide is DNA-directed RNA polymerase subunit beta' (Anaplasma marginale (strain Florida)).